The primary structure comprises 86 residues: High affinity immunoglobulin epsilon receptor subunit gamma (86 aa).

The N-terminal stretch at 1–18 (MYPAVVLLLLLLVEQAAA) is a signal peptide. Residues 19-23 (LGEPQ) lie on the Extracellular side of the membrane. A helical membrane pass occupies residues 24–44 (LCYILDAILFLYGIILTLLYC). Residues 45–86 (RLKIQVRKATVASYEKPDGIYTGLSTRNQETYETLKHEKPPQ) lie on the Cytoplasmic side of the membrane. The region spanning 54–82 (TVASYEKPDGIYTGLSTRNQETYETLKHE) is the ITAM domain. Phosphotyrosine is present on Y65. S69 is subject to Phosphoserine. Position 76 is a phosphotyrosine (Y76). The residue at position 78 (T78) is a Phosphothreonine.

This sequence belongs to the CD3Z/FCER1G family. As to quaternary structure, igE Fc receptor is a tetramer of an alpha chain, a beta chain, and two disulfide linked gamma chains. Associates with FCGR1A; forms a functional signaling complex. The signaling subunit of immunoglobulin gamma (IgG) Fc receptor complex. As a homodimer or a heterodimer of CD247 and FCER1G, associates with the ligand binding subunit FCGR3A to form a functional receptor complex. Associates with CLEC6A. Interacts with CLEC4E. Interacts (via ITAM domain) with SYK (via SH2 domains); activates SYK, enabling integrin-mediated activation of neutrophils and macrophages. Interacts with CSF2RB and recruits SYK in response to IL3 stimulation; this interaction is direct. Interacts with CD300LH; the interaction may be indirect. Interacts with CD300LD. Interacts with TARM1.

It is found in the cell membrane. Its function is as follows. Adapter protein containing an immunoreceptor tyrosine-based activation motif (ITAM) that transduces activation signals from various immunoreceptors. As a component of the high-affinity immunoglobulin E (IgE) receptor, mediates allergic inflammatory signaling in mast cells. As a constitutive component of interleukin-3 receptor complex, selectively mediates interleukin 4/IL4 production by basophils priming T-cells toward effector T-helper 2 subset. Associates with pattern recognition receptors CLEC4D and CLEC4E to form a functional signaling complex in myeloid cells. Binding of mycobacterial trehalose 6,6'-dimycolate (TDM) to this receptor complex leads to phosphorylation of ITAM, triggering activation of SYK, CARD9 and NF-kappa-B, consequently driving maturation of antigen-presenting cells and shaping antigen-specific priming of T-cells toward effector T-helper 1 and T-helper 17 cell subtypes. May function cooperatively with other activating receptors. Functionally linked to integrin beta-2/ITGB2-mediated neutrophil activation. Also involved in integrin alpha-2/ITGA2-mediated platelet activation. In Cavia porcellus (Guinea pig), this protein is High affinity immunoglobulin epsilon receptor subunit gamma (FCER1G).